Reading from the N-terminus, the 185-residue chain is Ribosome-recycling factor (185 aa).

Belongs to the RRF family.

It localises to the cytoplasm. Its function is as follows. Responsible for the release of ribosomes from messenger RNA at the termination of protein biosynthesis. May increase the efficiency of translation by recycling ribosomes from one round of translation to another. In Pasteurella multocida (strain Pm70), this protein is Ribosome-recycling factor.